The following is a 551-amino-acid chain: Chaperonin GroEL (551 aa).

ATP is bound by residues 30 to 33 (TLGP), K51, 87 to 91 (DGTTT), G415, 479 to 481 (NAA), and D495.

Belongs to the chaperonin (HSP60) family. As to quaternary structure, forms a cylinder of 14 subunits composed of two heptameric rings stacked back-to-back. Interacts with the co-chaperonin GroES.

The protein localises to the cytoplasm. It carries out the reaction ATP + H2O + a folded polypeptide = ADP + phosphate + an unfolded polypeptide.. Functionally, together with its co-chaperonin GroES, plays an essential role in assisting protein folding. The GroEL-GroES system forms a nano-cage that allows encapsulation of the non-native substrate proteins and provides a physical environment optimized to promote and accelerate protein folding. This Acidithiobacillus ferrooxidans (strain ATCC 23270 / DSM 14882 / CIP 104768 / NCIMB 8455) (Ferrobacillus ferrooxidans (strain ATCC 23270)) protein is Chaperonin GroEL.